Here is a 130-residue protein sequence, read N- to C-terminus: U-scoloptoxin(16)-Er4a (130 aa).

Positions 1–26 (MNTVSVVQFLAVGCAVFVLYGRGVFA) are cleaved as a signal peptide.

The protein belongs to the scoloptoxin-16 family. In terms of processing, contains 3 disulfide bonds. Expressed by the venom gland.

Its subcellular location is the secreted. The sequence is that of U-scoloptoxin(16)-Er4a from Ethmostigmus rubripes (Giant centipede).